Here is a 1296-residue protein sequence, read N- to C-terminus: Nuclear factor related to kappa-B-binding protein (1296 aa).

The 118-residue stretch at 39–156 (PEDLLEDPEI…LKQILASRSD (118 aa)) folds into the DEUBAD domain. 2 disordered regions span residues 165–186 (GPALPFPHKHHSPSRSPEEREW) and 204–232 (GDTALSSDEEDLSSWLPSSPARSPSPAVP). The segment covering 216 to 232 (SSWLPSSPARSPSPAVP) has biased composition (low complexity). 2 positions are modified to phosphoserine: Ser-228 and Ser-298. Lys-327 is covalently cross-linked (Glycyl lysine isopeptide (Lys-Gly) (interchain with G-Cter in SUMO2)). Ser-351 carries the post-translational modification Phosphoserine. The interval 370–495 (LGINEISSSF…FCKENEDSSD (126 aa)) is winged-helix like domain. Lys-469 is covalently cross-linked (Glycyl lysine isopeptide (Lys-Gly) (interchain with G-Cter in SUMO2)). Lys-488 is covalently cross-linked (Glycyl lysine isopeptide (Lys-Gly) (interchain with G-Cter in SUMO1); alternate). Lys-488 participates in a covalent cross-link: Glycyl lysine isopeptide (Lys-Gly) (interchain with G-Cter in SUMO2); alternate. 2 disordered regions span residues 663–758 (QAQA…SSGV) and 1015–1036 (HAADSPAKAPSASVPSSAPAGT). Positions 700–713 (PSEQSQMSLSDSSM) are enriched in low complexity. Residues 726–737 (PALPTPISPPPV) are compositionally biased toward pro residues. A compositionally biased stretch (polar residues) spans 741–758 (NRSGSSTVSEPAQSSSGV). Low complexity predominate over residues 1016 to 1034 (AADSPAKAPSASVPSSAPA). Ser-1019 is modified (phosphoserine). Lys-1234 carries the post-translational modification N6-acetyllysine. Ser-1288 bears the Phosphoserine mark.

This sequence belongs to the NFRKB family. As to quaternary structure, component of the chromatin remodeling INO80 complex; specifically part of a complex module associated with the N-terminus of INO80. Interacts with UCHL5.

The protein localises to the nucleus. Its function is as follows. Binds to the DNA consensus sequence 5'-GGGGAATCTCC-3'. In terms of biological role, putative regulatory component of the chromatin remodeling INO80 complex which is involved in transcriptional regulation, DNA replication and probably DNA repair. Modulates the deubiquitinase activity of UCHL5 in the INO80 complex. The chain is Nuclear factor related to kappa-B-binding protein (Nfrkb) from Mus musculus (Mouse).